We begin with the raw amino-acid sequence, 152 residues long: D-erythrulose-4-phosphate isomerase 2 (152 aa).

The active-site Proton acceptor is the cysteine 70.

The protein belongs to the LacAB/RpiB family.

The enzyme catalyses D-erythrulose 4-phosphate = D-erythrose 4-phosphate. The protein operates within carbohydrate metabolism; erythritol degradation. It functions in the pathway carbohydrate metabolism; D-threitol degradation. Its pathway is carbohydrate metabolism; L-threitol degradation. Its function is as follows. Catalyzes the isomerization of D-erythrulose-4P to D-erythrose-4P. Involved in the degradation pathways of L-threitol, D-threitol and erythritol, that allow M.smegmatis to grow on these compounds as the sole carbon source. In Mycolicibacterium smegmatis (strain ATCC 700084 / mc(2)155) (Mycobacterium smegmatis), this protein is D-erythrulose-4-phosphate isomerase 2.